The chain runs to 248 residues: Putative mutator protein MutT4 (248 aa).

Residues 1–64 (MSDGEQAKSR…GSTRMRTVHE (64 aa)) form a disordered region. Positions 9–20 (SRRRRGRRRGRR) are enriched in basic residues. A compositionally biased stretch (low complexity) spans 31–44 (AQPAGDATPTPATA). Residues 45 to 57 (KRSRSRSPRRGST) show a composition bias toward basic residues. In terms of domain architecture, Nudix hydrolase spans 62–198 (VHETSAGGLV…DERRLAEVAD (137 aa)). Positions 103, 118, 121, and 122 each coordinate Mg(2+). Positions 103–124 (GHIELGETAEQTAIREVAEETG) match the Nudix box motif. Residues 204-248 (LQSDGPAALPPLPPSSPRRRPQTHSRARHADDSAPGQHNGPGPGP) are disordered. Over residues 220–230 (PRRRPQTHSRA) the composition is skewed to basic residues.

Belongs to the Nudix hydrolase family. Mg(2+) serves as cofactor. Requires Mn(2+) as cofactor.

May be involved in the GO system responsible for removing an oxidatively damaged form of guanine (7,8-dihydro-8-oxoguanine, 8-oxo-dGTP) from DNA and the nucleotide pool. The polypeptide is Putative mutator protein MutT4 (mutT4) (Mycobacterium tuberculosis (strain CDC 1551 / Oshkosh)).